A 307-amino-acid polypeptide reads, in one-letter code: N-acetylmuramic acid 6-phosphate etherase (307 aa).

The 164-residue stretch at 57–220 (IIEAFKTNGR…TTASMIGVGK (164 aa)) folds into the SIS domain. The active-site Proton donor is Glu-85. Glu-116 is an active-site residue.

It belongs to the GCKR-like family. MurNAc-6-P etherase subfamily. In terms of assembly, homodimer.

The enzyme catalyses N-acetyl-D-muramate 6-phosphate + H2O = N-acetyl-D-glucosamine 6-phosphate + (R)-lactate. The protein operates within amino-sugar metabolism; N-acetylmuramate degradation. Its function is as follows. Specifically catalyzes the cleavage of the D-lactyl ether substituent of MurNAc 6-phosphate, producing GlcNAc 6-phosphate and D-lactate. The chain is N-acetylmuramic acid 6-phosphate etherase from Alkaliphilus metalliredigens (strain QYMF).